Reading from the N-terminus, the 86-residue chain is Large ribosomal subunit protein uL23 (86 aa).

This sequence belongs to the universal ribosomal protein uL23 family. In terms of assembly, part of the 50S ribosomal subunit. Contacts protein L29.

Its function is as follows. Binds to 23S rRNA. One of the proteins that surrounds the polypeptide exit tunnel on the outside of the ribosome. The sequence is that of Large ribosomal subunit protein uL23 from Caldivirga maquilingensis (strain ATCC 700844 / DSM 13496 / JCM 10307 / IC-167).